A 739-amino-acid polypeptide reads, in one-letter code: Alcohol dehydrogenase (quinone), dehydrogenase subunit (739 aa).

A signal peptide spans 1-35 (MISAVFGKRRSLSRTLTAGTICAALISGYATMASA). Pyrroloquinoline quinone is bound at residue E97. An intrachain disulfide couples C143 to C144. Pyrroloquinoline quinone is bound at residue R149. E217 contributes to the Ca(2+) binding site. T279 contacts pyrroloquinoline quinone. Ca(2+) is bound by residues N299 and D344. D344 (proton acceptor) is an active-site residue. Pyrroloquinoline quinone-binding residues include K371 and I585. One can recognise a Cytochrome c domain in the interval 635–739 (FDSKRTDNGY…NADGIPEQLP (105 aa)). C651, C654, H655, and M694 together coordinate heme c.

The protein belongs to the bacterial PQQ dehydrogenase family. The alcohol dehydrogenase multicomponent enzyme system is composed of a dehydrogenase subunit I (AdhA) and a cytochrome c subunit II (AdhB). Pyrroloquinoline quinone serves as cofactor. It depends on Ca(2+) as a cofactor. Heme c is required as a cofactor.

Its subcellular location is the cell membrane. The enzyme catalyses ethanol + a ubiquinone = a ubiquinol + acetaldehyde. Its function is as follows. Dehydrogenase component of the alcohol dehydrogenase multicomponent enzyme system which is involved in the production of acetic acid and in the ethanol oxidase respiratory chain. Quinohemoprotein alcohol dehydrogenase (ADH) catalyzes the oxidation of ethanol to acetaldehyde by transferring electrons to the ubiquinone embedded in the membrane phospholipids. The electrons transfer from ethanol to membranous ubiquinone occurs from pyrroloquinoline quinone (PQQ) to one heme c in subunit I (AdhA), and finally to two heme c in subunit II (AdhB). Besides ubiquinone reduction, ADH also has a ubiquinol (QH2) oxidation reaction which mediates electron transfer from ubiquinol to the non-energy generating bypass oxidase system. The electrons transfer occurs from ubiquinol (QH2) to the additional heme c within subunit II (AdhB). In Komagataeibacter europaeus (Gluconacetobacter europaeus), this protein is Alcohol dehydrogenase (quinone), dehydrogenase subunit.